A 492-amino-acid chain; its full sequence is Lysine--tRNA ligase (492 aa).

Aspartate 395 and glutamate 402 together coordinate Mg(2+).

Belongs to the class-II aminoacyl-tRNA synthetase family. In terms of assembly, homodimer. It depends on Mg(2+) as a cofactor.

It is found in the cytoplasm. The catalysed reaction is tRNA(Lys) + L-lysine + ATP = L-lysyl-tRNA(Lys) + AMP + diphosphate. The chain is Lysine--tRNA ligase from Thermus thermophilus (strain ATCC BAA-163 / DSM 7039 / HB27).